Here is a 228-residue protein sequence, read N- to C-terminus: Peptide deformylase (228 aa).

2 disordered regions span residues 1–28 (MSQDRRYTGCNTHSNTHSAQDREKEGAV) and 116–138 (GVPKRQTNKQQANNSTSCDEPDR). 2 stretches are compositionally biased toward polar residues: residues 8-18 (TGCNTHSNTHS) and 123-133 (NKQQANNSTSC). Residues Cys-141 and His-183 each coordinate Fe cation. Residue Glu-184 is part of the active site. His-187 serves as a coordination point for Fe cation.

The protein belongs to the polypeptide deformylase family. Requires Fe(2+) as cofactor.

The enzyme catalyses N-terminal N-formyl-L-methionyl-[peptide] + H2O = N-terminal L-methionyl-[peptide] + formate. Its function is as follows. Removes the formyl group from the N-terminal Met of newly synthesized proteins. Requires at least a dipeptide for an efficient rate of reaction. N-terminal L-methionine is a prerequisite for activity but the enzyme has broad specificity at other positions. The polypeptide is Peptide deformylase (Tropheryma whipplei (strain Twist) (Whipple's bacillus)).